A 326-amino-acid chain; its full sequence is N-acetyl-gamma-glutamyl-phosphate reductase (326 aa).

Residue Cys155 is part of the active site.

This sequence belongs to the NAGSA dehydrogenase family. Type 1 subfamily.

The protein localises to the cytoplasm. The catalysed reaction is N-acetyl-L-glutamate 5-semialdehyde + phosphate + NADP(+) = N-acetyl-L-glutamyl 5-phosphate + NADPH + H(+). It functions in the pathway amino-acid biosynthesis; L-arginine biosynthesis; N(2)-acetyl-L-ornithine from L-glutamate: step 3/4. Catalyzes the NADPH-dependent reduction of N-acetyl-5-glutamyl phosphate to yield N-acetyl-L-glutamate 5-semialdehyde. The protein is N-acetyl-gamma-glutamyl-phosphate reductase of Shewanella baltica (strain OS195).